The following is a 143-amino-acid chain: Large ribosomal subunit protein uL11 (143 aa).

Belongs to the universal ribosomal protein uL11 family. Part of the ribosomal stalk of the 50S ribosomal subunit. Interacts with L10 and the large rRNA to form the base of the stalk. L10 forms an elongated spine to which L12 dimers bind in a sequential fashion forming a multimeric L10(L12)X complex. In terms of processing, one or more lysine residues are methylated.

Functionally, forms part of the ribosomal stalk which helps the ribosome interact with GTP-bound translation factors. The polypeptide is Large ribosomal subunit protein uL11 (Leifsonia xyli subsp. xyli (strain CTCB07)).